The chain runs to 307 residues: Dihydroorotate dehydrogenase A (fumarate) (307 aa).

FMN-binding positions include Ser-21 and 46–47 (KT). Substrate is bound by residues Lys-46, 70 to 74 (NSVGL), and Asn-130. Residue Asn-130 coordinates FMN. Cys-133 acts as the Nucleophile in catalysis. FMN contacts are provided by Lys-168 and Ile-194. 195-196 (NT) provides a ligand contact to substrate. FMN is bound by residues Gly-220, 246–247 (GG), and 268–269 (GS).

It belongs to the dihydroorotate dehydrogenase family. Type 1 subfamily. Homodimer. The cofactor is FMN.

Its subcellular location is the cytoplasm. The enzyme catalyses (S)-dihydroorotate + fumarate = orotate + succinate. It functions in the pathway pyrimidine metabolism; UMP biosynthesis via de novo pathway. Functionally, catalyzes the conversion of dihydroorotate to orotate with fumarate as the electron acceptor. This chain is Dihydroorotate dehydrogenase A (fumarate) (pyrD), found in Lactobacillus helveticus (strain DPC 4571).